The chain runs to 284 residues: 4-hydroxybenzoate octaprenyltransferase (284 aa).

The next 8 helical transmembrane spans lie at Val-14–Thr-34, Phe-41–Ile-61, Trp-93–Ile-113, Tyr-134–Tyr-154, Trp-166–Val-186, Ile-209–Glu-229, Ile-233–Leu-253, and Cys-262–Leu-282.

Belongs to the UbiA prenyltransferase family. It depends on Mg(2+) as a cofactor.

It localises to the cell inner membrane. It carries out the reaction all-trans-octaprenyl diphosphate + 4-hydroxybenzoate = 4-hydroxy-3-(all-trans-octaprenyl)benzoate + diphosphate. Its pathway is cofactor biosynthesis; ubiquinone biosynthesis. Functionally, catalyzes the prenylation of para-hydroxybenzoate (PHB) with an all-trans polyprenyl group. Mediates the second step in the final reaction sequence of ubiquinone-8 (UQ-8) biosynthesis, which is the condensation of the polyisoprenoid side chain with PHB, generating the first membrane-bound Q intermediate 3-octaprenyl-4-hydroxybenzoate. In Blochmanniella floridana, this protein is 4-hydroxybenzoate octaprenyltransferase.